A 319-amino-acid polypeptide reads, in one-letter code: Phosphatidylglycerol--prolipoprotein diacylglyceryl transferase (319 aa).

3 helical membrane-spanning segments follow: residues 21–41, 50–70, and 98–118; these read PIPI…AIWL, GGNP…GIIG, and NGGL…AVFF. R144 serves as a coordination point for a 1,2-diacyl-sn-glycero-3-phospho-(1'-sn-glycerol). 2 consecutive transmembrane segments (helical) span residues 191–211 and 254–274; these read VHPT…LLMW and INTI…FLLK. A disordered region spans residues 295–319; it reads AVASPDGKPLPKAGEGIDGETPSTR.

Belongs to the Lgt family.

Its subcellular location is the cell membrane. It carries out the reaction L-cysteinyl-[prolipoprotein] + a 1,2-diacyl-sn-glycero-3-phospho-(1'-sn-glycerol) = an S-1,2-diacyl-sn-glyceryl-L-cysteinyl-[prolipoprotein] + sn-glycerol 1-phosphate + H(+). The protein operates within protein modification; lipoprotein biosynthesis (diacylglyceryl transfer). Functionally, catalyzes the transfer of the diacylglyceryl group from phosphatidylglycerol to the sulfhydryl group of the N-terminal cysteine of a prolipoprotein, the first step in the formation of mature lipoproteins. The chain is Phosphatidylglycerol--prolipoprotein diacylglyceryl transferase from Corynebacterium glutamicum (strain R).